The primary structure comprises 485 residues: WD repeat-containing protein 13 (485 aa).

3 positions are modified to phosphoserine: Ser-70, Ser-74, and Ser-79. Residue Arg-114 is modified to Asymmetric dimethylarginine; alternate. Arg-114 carries the omega-N-methylarginine; alternate modification. WD repeat units lie at residues 170-210 (HVDE…PTVL), 215-254 (GHTR…CIRE), 302-341 (KLTG…GKLT), 406-446 (HPVR…KAAV), and 451-484 (GHSA…RREQ).

It localises to the nucleus. This chain is WD repeat-containing protein 13 (WDR13), found in Pongo abelii (Sumatran orangutan).